Reading from the N-terminus, the 506-residue chain is Protoheme IX farnesyltransferase, mitochondrial (506 aa).

A mitochondrion-targeting transit peptide spans 1-42; that stretch reads MILRSSLGRLGVARESPLCLQCLNRSRPSFPAVNKLASISRL. Residues 45 to 61 are compositionally biased toward polar residues; the sequence is TVAGQSPSSSVNKTYFS. The interval 45–131 is disordered; it reads TVAGQSPSSS…AEPVIPPDAS (87 aa). Low complexity predominate over residues 73–88; that stretch reads PSLFTSLSPSNSPSQL. Residues 89 to 100 show a composition bias toward polar residues; that stretch reads NRGHSTPSTSPE. The next 8 helical transmembrane spans lie at 163-183, 199-221, 247-267, 269-289, 297-317, 337-357, 390-410, and 439-459; these read FLVL…SILA, LTFL…LNMI, AAVF…YFGT, PTVT…YTPL, TWIG…AAAG, LGGW…FNAL, VLMF…HGFL, and GLFW…LVTK.

It belongs to the UbiA prenyltransferase family.

The protein localises to the mitochondrion membrane. It catalyses the reaction heme b + (2E,6E)-farnesyl diphosphate + H2O = Fe(II)-heme o + diphosphate. Functionally, converts protoheme IX and farnesyl diphosphate to heme O. This Emericella nidulans (strain FGSC A4 / ATCC 38163 / CBS 112.46 / NRRL 194 / M139) (Aspergillus nidulans) protein is Protoheme IX farnesyltransferase, mitochondrial (cox10).